The primary structure comprises 175 residues: Large ribosomal subunit protein uL22y (175 aa).

The segment covering 153–163 (EKEEPVKKEPE) has biased composition (basic and acidic residues). A disordered region spans residues 153 to 175 (EKEEPVKKEPETQLAAKSKKSAA).

Belongs to the universal ribosomal protein uL22 family.

The protein is Large ribosomal subunit protein uL22y (RPL17B) of Arabidopsis thaliana (Mouse-ear cress).